Here is a 397-residue protein sequence, read N- to C-terminus: Ubiquitin-like modifier-activating enzyme 5 (397 aa).

ATP contacts are provided by G76, D97, K120, N143, and N177. The Zn(2+) site is built by C219 and C222. The active-site Glycyl thioester intermediate is C243. 2 residues coordinate Zn(2+): C296 and C301. A disordered region spans residues 343–384 (PSDAPTDLSQSTDVGQGLRLAYEAPEKSSAEATQAATAPVDD).

Belongs to the ubiquitin-activating E1 family. UBA5 subfamily.

Functionally, E1-like enzyme which activates UFM1. The polypeptide is Ubiquitin-like modifier-activating enzyme 5 (Drosophila pseudoobscura pseudoobscura (Fruit fly)).